The following is a 434-amino-acid chain: Histidinol dehydrogenase (434 aa).

The NAD(+) site is built by tyrosine 130, glutamine 188, and asparagine 211. Serine 237, glutamine 259, and histidine 262 together coordinate substrate. The Zn(2+) site is built by glutamine 259 and histidine 262. Residues glutamate 326 and histidine 327 each act as proton acceptor in the active site. 4 residues coordinate substrate: histidine 327, aspartate 360, glutamate 414, and histidine 419. Aspartate 360 is a Zn(2+) binding site. Histidine 419 is a binding site for Zn(2+).

It belongs to the histidinol dehydrogenase family. In terms of assembly, homodimer. It depends on Zn(2+) as a cofactor.

It carries out the reaction L-histidinol + 2 NAD(+) + H2O = L-histidine + 2 NADH + 3 H(+). Its pathway is amino-acid biosynthesis; L-histidine biosynthesis; L-histidine from 5-phospho-alpha-D-ribose 1-diphosphate: step 9/9. Functionally, catalyzes the sequential NAD-dependent oxidations of L-histidinol to L-histidinaldehyde and then to L-histidine. The protein is Histidinol dehydrogenase of Salmonella paratyphi A (strain ATCC 9150 / SARB42).